Reading from the N-terminus, the 319-residue chain is ATP-dependent 6-phosphofructokinase (319 aa).

Position 11 (G11) interacts with ATP. 21–25 (RAVAR) serves as a coordination point for ADP. ATP is bound by residues 72-73 (RY) and 102-105 (GDGS). D103 lines the Mg(2+) pocket. Residue 125–127 (TID) coordinates substrate. Residue D127 is the Proton acceptor of the active site. R154 is a binding site for ADP. Substrate is bound by residues R162 and 169-171 (MGR). ADP is bound by residues 185–187 (GAE) and R211. Residues E222, R243, and 249–252 (HIVR) each bind substrate.

The protein belongs to the phosphofructokinase type A (PFKA) family. ATP-dependent PFK group I subfamily. Prokaryotic clade 'B1' sub-subfamily. As to quaternary structure, homotetramer. Mg(2+) serves as cofactor.

It localises to the cytoplasm. It catalyses the reaction beta-D-fructose 6-phosphate + ATP = beta-D-fructose 1,6-bisphosphate + ADP + H(+). The protein operates within carbohydrate degradation; glycolysis; D-glyceraldehyde 3-phosphate and glycerone phosphate from D-glucose: step 3/4. With respect to regulation, allosterically activated by ADP and other diphosphonucleosides, and allosterically inhibited by phosphoenolpyruvate. Its function is as follows. Catalyzes the phosphorylation of D-fructose 6-phosphate to fructose 1,6-bisphosphate by ATP, the first committing step of glycolysis. In Lacticaseibacillus casei (strain BL23) (Lactobacillus casei), this protein is ATP-dependent 6-phosphofructokinase.